The primary structure comprises 382 residues: MSLNIFWFLPTHGDGKYLGTSEGARAVDHGYLQQIAQAADRLGFGGVLIPTGRSCEDSWLVAASLIPVTQRLKFLVALRPGIISPTVAARQAATLDRLSNGRALFNLVTGGDPDELAGDGLHLNHQERYEASVEFTRIWRKVLEGENVDYDGKHIQVKGAKLLYPPIQQPRPPLYFGGSSEAAQDLAAEQVELYLTWGEPPAAVAEKIAQVREKAAAQGREVRFGIRLHVIVRETNEEAWAAAERLISHLDDDTISRAQASLARFDSVGQQRMAALHGGNRDNLEVSPNLWAGVGLVRGGAGTALVGDGPTVAARVKEYADLGIDTFIFSGYPHLEESYRVAELLFPHLDVQRPEQPKAGGYVSPFGEMVANDILPKSVSQS.

This sequence belongs to the SsuD family.

The catalysed reaction is an alkanesulfonate + FMNH2 + O2 = an aldehyde + FMN + sulfite + H2O + 2 H(+). Its function is as follows. Catalyzes the desulfonation of aliphatic sulfonates. This is Alkanesulfonate monooxygenase from Pseudomonas putida (strain ATCC 47054 / DSM 6125 / CFBP 8728 / NCIMB 11950 / KT2440).